Reading from the N-terminus, the 436-residue chain is Cyclin-A2-2 (436 aa).

It belongs to the cyclin family. Cyclin AB subfamily. Expressed in roots, stems, leaves, flowers and siliques.

This is Cyclin-A2-2 (CYCA2-2) from Arabidopsis thaliana (Mouse-ear cress).